The sequence spans 105 residues: 5,5'-dehydrodivanillate O-demethylase ferredoxin subunit (105 aa).

A 2Fe-2S ferredoxin-type domain is found at 2-105; the sequence is AQLKVVTRDG…GMTVTIAPED (104 aa). [2Fe-2S] cluster-binding residues include cysteine 40, cysteine 46, cysteine 49, and cysteine 86.

This sequence belongs to the adrenodoxin/putidaredoxin family. In terms of assembly, monomer. The three-component monooxygenase is composed of an oxygenase (LigXa), a ferredoxin (LigXc) and a ferredoxin reductase (LigXd). [2Fe-2S] cluster serves as cofactor.

It carries out the reaction 5,5'-dehydrodivanillate + NADH + O2 + H(+) = 2,2',3-trihydroxy-3'-methoxy-5,5'-dicarboxybiphenyl + formaldehyde + NAD(+) + H2O. Involved in the catabolism of 5,5'-dehydrodivanillate (DDVA), an intermediate in the biodegradation of lignin. Part of a three-component monooxygenase that catalyzes the O-demethylation of DDVA, leading to the formation of 2,2',3-trihydroxy-3'-methoxy-5,5'-dicarboxybiphenyl (OH-DDVA). LigXc probably functions as an intermediate electron transfer protein between LigXd and LigXa. The polypeptide is 5,5'-dehydrodivanillate O-demethylase ferredoxin subunit (Sphingobium sp. (strain NBRC 103272 / SYK-6)).